The primary structure comprises 952 residues: Probable mixed-linked glucan synthase 6 (952 aa).

The next 2 membrane-spanning stretches (helical) occupy residues 102 to 122 and 132 to 152; these read LLHP…LFVI and AMWL…SWLL. The active site involves D227. A coiled-coil region spans residues 278-308; it reads EEFVNDRRRVRKEYDDFKARINGLEHDIKQR. Residues D429 and D431 each coordinate substrate. The active site involves D636. Transmembrane regions (helical) follow at residues 718–738, 744–764, 782–802, 834–854, 865–885, and 898–918; these read LFLI…HFIV, MFYV…VLEV, MTAS…KVVF, WLMI…AVAF, WLKV…LYPF, and VVVL…YINI.

The protein belongs to the glycosyltransferase 2 family. Plant cellulose synthase-like F subfamily.

It localises to the golgi apparatus membrane. In terms of biological role, may catalyze both beta-1,3 and beta-1,4 glycosidic linkage on beta-D-glucan. Essential for (1,3;1,4)-beta-D-glucans synthesis in grasses and cereals (Poaceae). The mixed-linked glucans (which are not present in walls of dicotyledons or most other monocotyledonous plants) are particularly important constituents of the walls of the starchy endosperm and aleurone cells of cereal grains such as oats, wheat, rice and barley. They can account for up to 70% by weight of the wall. This Oryza sativa subsp. japonica (Rice) protein is Probable mixed-linked glucan synthase 6 (CSLF6).